Consider the following 750-residue polypeptide: Serine/threonine-protein kinase GE16371 (750 aa).

Doublecortin domains follow at residues 159-245 (LRIK…VEYN) and 315-398 (RIVT…AEDF). The Protein kinase domain occupies 479–737 (YTLGKIIGDG…SEDILDHYWT (259 aa)). Residues 485–493 (IGDGNFAIV) and Lys508 contribute to the ATP site. The Proton acceptor role is filled by Asp600.

The protein belongs to the protein kinase superfamily. CAMK Ser/Thr protein kinase family. CaMK subfamily.

The enzyme catalyses L-seryl-[protein] + ATP = O-phospho-L-seryl-[protein] + ADP + H(+). It carries out the reaction L-threonyl-[protein] + ATP = O-phospho-L-threonyl-[protein] + ADP + H(+). The polypeptide is Serine/threonine-protein kinase GE16371 (Drosophila yakuba (Fruit fly)).